The primary structure comprises 207 residues: Ribosomal RNA small subunit methyltransferase G (207 aa).

S-adenosyl-L-methionine-binding positions include Gly-73, Leu-78, 124–125, and Arg-139; that span reads VE.

This sequence belongs to the methyltransferase superfamily. RNA methyltransferase RsmG family.

The protein localises to the cytoplasm. It carries out the reaction guanosine(527) in 16S rRNA + S-adenosyl-L-methionine = N(7)-methylguanosine(527) in 16S rRNA + S-adenosyl-L-homocysteine. In terms of biological role, specifically methylates the N7 position of guanine in position 527 of 16S rRNA. The polypeptide is Ribosomal RNA small subunit methyltransferase G (Escherichia coli (strain SMS-3-5 / SECEC)).